The following is a 429-amino-acid chain: Endoglucanase A (429 aa).

The N-terminal stretch at 1–34 (MVSKKQKFLTVILVIVLAIVIVGGVFGISFVKGR) is a signal peptide. Positions 46-94 (AKTEQVKEPAKEEPKLVIKEKKQDESAKKEQELKKAKEEAEAAVEKETE) are enriched in basic and acidic residues. Residues 46-100 (AKTEQVKEPAKEEPKLVIKEKKQDESAKKEQELKKAKEEAEAAVEKETEKTEEEP) are disordered. Catalysis depends on Glu249, which acts as the Proton donor. The active-site Nucleophile is Glu334.

This sequence belongs to the glycosyl hydrolase 5 (cellulase A) family.

The catalysed reaction is Endohydrolysis of (1-&gt;4)-beta-D-glucosidic linkages in cellulose, lichenin and cereal beta-D-glucans.. In Butyrivibrio fibrisolvens, this protein is Endoglucanase A (celA).